The chain runs to 526 residues: Ferrochelatase-2, chloroplastic (526 aa).

It belongs to the ferrochelatase family.

The protein resides in the plastid. Its subcellular location is the chloroplast. It catalyses the reaction heme b + 2 H(+) = protoporphyrin IX + Fe(2+). It participates in porphyrin-containing compound metabolism; protoheme biosynthesis; protoheme from protoporphyrin-IX: step 1/1. In terms of biological role, catalyzes the ferrous insertion into protoporphyrin IX. The chain is Ferrochelatase-2, chloroplastic from Oryza sativa subsp. japonica (Rice).